Consider the following 843-residue polypeptide: Axin-2 (843 aa).

The segment at 1–75 (MSSAMLVTCL…EGRASPDSPL (75 aa)) is disordered. Residues 21-30 (APRPPVPGEE) carry the Tankyrase-binding motif motif. Residues 56 to 69 (RRNEDGLGEPEGRA) are compositionally biased toward basic and acidic residues. Positions 81–200 (SLHSLLGDQD…LTSDIYLEYV (120 aa)) constitute an RGS domain. Positions 327–413 (VGSKKQLQRE…REGSELTLNS (87 aa)) are interaction with GSK3B. The tract at residues 334–393 (QREMHRSVKANGQVSLPHFPRTHRLPKEMTPVEPATFAAELISRLEKLKLELESRHSLEE) is interaction with SIAH1 and SIAH2. 4 disordered regions span residues 396–435 (QQIR…EEDP), 447–494 (LKTP…AASP), 561–674 (APET…RTTP), and 718–748 (ASQQ…EDHK). Residues 413–476 (SREGAPTQHP…PDHHHHHHSQ (64 aa)) form an interaction with beta-catenin region. 2 stretches are compositionally biased toward low complexity: residues 477–494 (YHSL…AASP) and 588–597 (PGLALPAREG). A compositionally biased stretch (polar residues) spans 727-741 (SATVQTGATPFSNPS). One can recognise a DIX domain in the interval 761–843 (ASELVVTYFF…RILGKVERID (83 aa)).

As to quaternary structure, interacts with glycogen synthase kinase-3 beta (GSK3B) and beta-catenin. The interaction between axin and beta-catenin occurs via the armadillo repeats contained in beta-catenin. Interacts with SMAD7 and RNF111. Interacts with ANKRD6. Interacts with SIAH1. Interacts with SIAH2. Post-translationally, probably phosphorylated by GSK3B and dephosphorylated by PP2A. ADP-ribosylated by tankyrase TNKS and TNKS2. Poly-ADP-ribosylated protein is recognized by RNF146, followed by ubiquitination and subsequent activation of the Wnt signaling pathway. In terms of processing, ubiquitinated by RNF146 when poly-ADP-ribosylated, leading to its degradation and subsequent activation of the Wnt signaling pathway. Deubiquitinated by USP34, deubiquitinated downstream of beta-catenin stabilization step: deubiquitination is important Wnt signaling to positively regulate beta-catenin (CTNBB1)-mediated transcription. Expressed in brain and lymphoblast.

The protein resides in the cytoplasm. Inhibitor of the Wnt signaling pathway. Down-regulates beta-catenin. Probably facilitate the phosphorylation of beta-catenin and APC by GSK3B. The polypeptide is Axin-2 (AXIN2) (Homo sapiens (Human)).